The sequence spans 1201 residues: Coatomer subunit alpha (1201 aa).

WD repeat units follow at residues 9–39 (SKSTRAKGIAFHPSRPWVLVALFSSTIQLWD), 51–81 (DHEGPVRGLDFHPTQPIFVSAGDDYTIKVWS), 93–123 (GHLDYVRTVFFHRELPWIISASDDQTIRIWN), 135–165 (GHNHFVMCAQFHPTDDLIVSASLDETIRIWD), 207–237 (GHTRGVNWASFHPTLPLIVSGSDDRQVKLWR), and 251–281 (GHTNNVDSVIFHPHQNLIISVGEDKTLRVWD). Residues 842 to 862 (AVNTTQEQEEPLGEENFNDED) form a disordered region. Acidic residues predominate over residues 848 to 862 (EQEEPLGEENFNDED).

Oligomeric complex that consists of at least the alpha, beta, beta', gamma, delta, epsilon and zeta subunits. Interacts with the ESCRT-0 subunit VPS27. Interacts with KEI1 (via C-terminal region).

The protein resides in the cytoplasm. It localises to the golgi apparatus membrane. It is found in the cytoplasmic vesicle. Its subcellular location is the COPI-coated vesicle membrane. The coatomer is a cytosolic protein complex that binds to dilysine motifs and reversibly associates with Golgi non-clathrin-coated vesicles, which further mediate biosynthetic protein transport from the ER, via the Golgi up to the trans Golgi network. Coatomer complex is required for budding from Golgi membranes, and is essential for the retrograde Golgi-to-ER transport of dilysine-tagged proteins. The protein is Coatomer subunit alpha (COP1) of Saccharomyces cerevisiae (strain ATCC 204508 / S288c) (Baker's yeast).